The chain runs to 372 residues: GTPase Obg (372 aa).

One can recognise an Obg domain in the interval Met1 to Leu159. The tract at residues Leu128 to Gly147 is disordered. In terms of domain architecture, OBG-type G spans Ala160–Val334. Residues Gly166–Ser173, Phe191–Ala195, Asp213–Gly216, Asn284–Asp287, and Ser315–Leu317 each bind GTP. Residues Ser173 and Thr193 each contribute to the Mg(2+) site.

The protein belongs to the TRAFAC class OBG-HflX-like GTPase superfamily. OBG GTPase family. In terms of assembly, monomer. Mg(2+) is required as a cofactor.

Its subcellular location is the cytoplasm. Its function is as follows. An essential GTPase which binds GTP, GDP and possibly (p)ppGpp with moderate affinity, with high nucleotide exchange rates and a fairly low GTP hydrolysis rate. Plays a role in control of the cell cycle, stress response, ribosome biogenesis and in those bacteria that undergo differentiation, in morphogenesis control. This chain is GTPase Obg, found in Burkholderia mallei (strain NCTC 10247).